Here is a 364-residue protein sequence, read N- to C-terminus: Chorismate synthase (364 aa).

NADP(+) is bound at residue Arg-47. Residues 125 to 127, Gly-285, 300 to 304, and Arg-327 each bind FMN; these read RFS and KPTPS.

It belongs to the chorismate synthase family. Homotetramer. The cofactor is FMNH2.

It catalyses the reaction 5-O-(1-carboxyvinyl)-3-phosphoshikimate = chorismate + phosphate. The protein operates within metabolic intermediate biosynthesis; chorismate biosynthesis; chorismate from D-erythrose 4-phosphate and phosphoenolpyruvate: step 7/7. In terms of biological role, catalyzes the anti-1,4-elimination of the C-3 phosphate and the C-6 proR hydrogen from 5-enolpyruvylshikimate-3-phosphate (EPSP) to yield chorismate, which is the branch point compound that serves as the starting substrate for the three terminal pathways of aromatic amino acid biosynthesis. This reaction introduces a second double bond into the aromatic ring system. This Dehalococcoides mccartyi (strain ATCC BAA-2100 / JCM 16839 / KCTC 5957 / BAV1) protein is Chorismate synthase.